Here is a 327-residue protein sequence, read N- to C-terminus: Biotin synthase (327 aa).

The Radical SAM core domain occupies 52–279; sequence TKVQLSTLVS…ASYVRLSAGR (228 aa). The [4Fe-4S] cluster site is built by Cys67, Cys71, and Cys74. The [2Fe-2S] cluster site is built by Cys111, Cys142, Cys202, and Arg274.

This sequence belongs to the radical SAM superfamily. Biotin synthase family. As to quaternary structure, homodimer. [4Fe-4S] cluster is required as a cofactor. The cofactor is [2Fe-2S] cluster.

The catalysed reaction is (4R,5S)-dethiobiotin + (sulfur carrier)-SH + 2 reduced [2Fe-2S]-[ferredoxin] + 2 S-adenosyl-L-methionine = (sulfur carrier)-H + biotin + 2 5'-deoxyadenosine + 2 L-methionine + 2 oxidized [2Fe-2S]-[ferredoxin]. The protein operates within cofactor biosynthesis; biotin biosynthesis; biotin from 7,8-diaminononanoate: step 2/2. Its function is as follows. Catalyzes the conversion of dethiobiotin (DTB) to biotin by the insertion of a sulfur atom into dethiobiotin via a radical-based mechanism. This is Biotin synthase from Chromobacterium violaceum (strain ATCC 12472 / DSM 30191 / JCM 1249 / CCUG 213 / NBRC 12614 / NCIMB 9131 / NCTC 9757 / MK).